A 204-amino-acid polypeptide reads, in one-letter code: Chaperone protein TorD (204 aa).

The protein belongs to the TorD/DmsD family. TorD subfamily.

Its subcellular location is the cytoplasm. Functionally, involved in the biogenesis of TorA. Acts on TorA before the insertion of the molybdenum cofactor and, as a result, probably favors a conformation of the apoenzyme that is competent for acquiring the cofactor. The protein is Chaperone protein TorD of Shewanella baltica (strain OS223).